We begin with the raw amino-acid sequence, 892 residues long: MTDVTVKSLADEIQTPVDRLVQQFADAGIKKSEVDSVTQQEKETLLAHLNREHGSAPNKLTLQRKTRSTLNIPSTGGKSKSVQIEVRKKRTYVNTPEAEQAKAEEQAQREAEEQAQREAEAAAQKIAEEKAKRAAEEQAKREAAEKAKRQAAEKEKVTNQQTDEKTKPAQTDKARREAEAAELKRSVEEETRRKVEEDAKRVAEEARKMAAENEGKWPEPVAEQTESADYHVTTSQHARAAEDENDAKVEGDRRSRTRGGKATKQKKGNKLSESKADREEARAVGRKGKRKPSTLQQSFNKPVVAVNRDVVIGETVTVAELANKMAVKGSQVIKAMMKLGAMATINQVIDQETAQLVAEEMGHKVILRRENELEEALMSDRDTGAEAAAEHRAPVVTIMGHVDHGKTSLLDYIRSTKVASGEAGGITQHIGAYHVETENGMITFLDTPGHAAFTSMRARGAQATDIVVLVVAADDGVMPQTIEAIQHAKAANVPVVVAVNKIDKPAADPNRVKTELIQHGIISEDFGGDVPFIEVSAKVGTGIDDLLQAILLQAEVMELKAVRTGMASGVVIESFLDKGRGPVATVLVQQGTLNKGDIVLCGFEYGRVRAMRDELGRDITSAGPSIPVEILGLSSVPAAGDEVTVVRDEKKAREVALYRQGKFREVKLARQQKSKLENMFANMTEGEVSELNIVIKSDVQGSCEAICDSLEKLSTDEVKVRIVGSGVGGITETDATLAAASGAIILGFNVRADASARRVVETEGLDLRYYSVIYSLIDEVKQAMSGMLAPEYKQQIIGLAEVRDVFKSPKFGAIAGCMVTEGVIKRNNPIRVLRDNVVIYEGELESLRRFKDDVNEVRNGMECGIGVKNYNDVRTGDVIEVFEIIEIKRTIA.

Residues 51–296 (REHGSAPNKL…KGKRKPSTLQ (246 aa)) form a disordered region. The span at 68-82 (STLNIPSTGGKSKSV) shows a compositional bias: polar residues. Over residues 99-217 (EQAKAEEQAQ…KMAAENEGKW (119 aa)) the composition is skewed to basic and acidic residues. Positions 224–237 (QTESADYHVTTSQH) are enriched in polar residues. Residues 239-254 (RAAEDENDAKVEGDRR) show a composition bias toward basic and acidic residues. Positions 255–269 (SRTRGGKATKQKKGN) are enriched in basic residues. Residues 270–283 (KLSESKADREEARA) show a composition bias toward basic and acidic residues. The 170-residue stretch at 391 to 560 (HRAPVVTIMG…LLQAEVMELK (170 aa)) folds into the tr-type G domain. Positions 400–407 (GHVDHGKT) are G1. A GTP-binding site is contributed by 400 to 407 (GHVDHGKT). A G2 region spans residues 425-429 (GITQH). Residues 446 to 449 (DTPG) form a G3 region. GTP is bound by residues 446 to 450 (DTPGH) and 500 to 503 (NKID). A G4 region spans residues 500–503 (NKID). The tract at residues 536 to 538 (SAK) is G5.

It belongs to the TRAFAC class translation factor GTPase superfamily. Classic translation factor GTPase family. IF-2 subfamily.

Its subcellular location is the cytoplasm. Functionally, one of the essential components for the initiation of protein synthesis. Protects formylmethionyl-tRNA from spontaneous hydrolysis and promotes its binding to the 30S ribosomal subunits. Also involved in the hydrolysis of GTP during the formation of the 70S ribosomal complex. This chain is Translation initiation factor IF-2, found in Yersinia enterocolitica serotype O:8 / biotype 1B (strain NCTC 13174 / 8081).